We begin with the raw amino-acid sequence, 598 residues long: Nuclear receptor subfamily 4 group A member 2 (598 aa).

The disordered stretch occupies residues 1–22 (MPCVQAQYGSSPQGASPASQSY). The segment covering 8–22 (YGSSPQGASPASQSY) has biased composition (low complexity). A DNA-binding region (nuclear receptor) is located at residues 260 to 335 (EGLCAVCGDN…VGMVKEVVRT (76 aa)). NR C4-type zinc fingers lie at residues 263–283 (CAVCGDNAACQHYGVRTCEGC) and 299–323 (CLANKNCPVDKRRRNRCQYCRFQKC). Positions 287-314 (FKRTVQKNAKYVCLANKNCPVDKRRRNR) match the Bipartite nuclear localization signal (NLS1) motif. Positions 337-361 (SLKGRRGRLPSKPKSPQEPSPPSPP) are disordered. A Nuclear localization signal (NLS1) motif is present at residues 338 to 350 (LKGRRGRLPSKPK). A compositionally biased stretch (pro residues) spans 352 to 361 (PQEPSPPSPP). An NR LBD domain is found at 360-595 (PPVSLISALV…AIIDKLFLDT (236 aa)). Positions 443–452 (FLELFVLRLA) match the nuclear export sequence (NES1) motif. Positions 568 to 577 (QGLQRIFYLK) match the nuclear export sequence (NES2) motif.

Belongs to the nuclear hormone receptor family. NR4 subfamily. Interacts with SFPQ, NCOR2, SIN3A and HADC1. The interaction with NCOR2 increases in the absence of PITX3. Interacts with PER2. As to expression, expressed in a number of cell lines of T-cell, B-cell and fibroblast origin. Strong expression in brain tissue.

Its subcellular location is the cytoplasm. It is found in the nucleus. Its function is as follows. Transcriptional regulator which is important for the differentiation and maintenance of meso-diencephalic dopaminergic (mdDA) neurons during development. It is crucial for expression of a set of genes such as SLC6A3, SLC18A2, TH and DRD2 which are essential for development of mdDA neurons. The protein is Nuclear receptor subfamily 4 group A member 2 (NR4A2) of Homo sapiens (Human).